The chain runs to 214 residues: NAD(P)H-quinone oxidoreductase subunit 5, chloroplastic (214 aa).

2 consecutive transmembrane segments (helical) span residues 84 to 104 (LFPLLILLLFTFFIGFIGIPF) and 152 to 172 (SLAILGLFIAYIFYGSAYSFF).

Belongs to the complex I subunit 5 family. As to quaternary structure, NDH is composed of at least 16 different subunits, 5 of which are encoded in the nucleus.

It is found in the plastid. It localises to the chloroplast thylakoid membrane. It catalyses the reaction a plastoquinone + NADH + (n+1) H(+)(in) = a plastoquinol + NAD(+) + n H(+)(out). It carries out the reaction a plastoquinone + NADPH + (n+1) H(+)(in) = a plastoquinol + NADP(+) + n H(+)(out). NDH shuttles electrons from NAD(P)H:plastoquinone, via FMN and iron-sulfur (Fe-S) centers, to quinones in the photosynthetic chain and possibly in a chloroplast respiratory chain. The immediate electron acceptor for the enzyme in this species is believed to be plastoquinone. Couples the redox reaction to proton translocation, and thus conserves the redox energy in a proton gradient. This chain is NAD(P)H-quinone oxidoreductase subunit 5, chloroplastic (ndhF), found in Brachypodium sylvaticum (False brome).